An 85-amino-acid chain; its full sequence is Transcription factor 4 (85 aa).

The region spanning E7–L60 is the bHLH domain. Positions Q62–S85 are class A specific domain.

In terms of assembly, efficient DNA binding requires dimerization with another bHLH protein. Forms homo- or heterooligomers with myogenin.

It is found in the nucleus. Its function is as follows. Transcription factor that binds to the immunoglobulin enhancer Mu-E5/KE5-motif. Involved in the initiation of neuronal differentiation. Binds to the E-box present in the somatostatin receptor 2 initiator element (SSTR2-INR) to activate transcription. The sequence is that of Transcription factor 4 (TCF4) from Gallus gallus (Chicken).